The chain runs to 55 residues: MSKSKREVIKLISSAGTKHFYTTTKNKSHNLKKIKLKKFDPVIKKHVIYNEAKLK.

The protein belongs to the bacterial ribosomal protein bL33 family.

The chain is Large ribosomal subunit protein bL33 from Wigglesworthia glossinidia brevipalpis.